Consider the following 409-residue polypeptide: Peptidase T (409 aa).

H78 provides a ligand contact to Zn(2+). Residue D80 is part of the active site. D140 is a binding site for Zn(2+). E173 functions as the Proton acceptor in the catalytic mechanism. Positions 174, 196, and 379 each coordinate Zn(2+).

It belongs to the peptidase M20B family. The cofactor is Zn(2+).

It is found in the cytoplasm. The enzyme catalyses Release of the N-terminal residue from a tripeptide.. Cleaves the N-terminal amino acid of tripeptides. In Salmonella paratyphi A (strain ATCC 9150 / SARB42), this protein is Peptidase T.